The sequence spans 488 residues: MELSITTSIALATIVFFLYKLATRPKSTKKQLPEASRLPIIGHMHHLIGTMPHRGVMDLARKHGSLMHLQLGEVSTIVVSSPKWAKEILTTYDITFANRPETLTGEIIAYHNTDIVLAPYGEYWRQLRKLCTLELLSVKKVKSFQSIREEECWNLVKEVKESGSGKPINLSESIFTMIATILSRAAFGKGIKDQREFTEIVKEILRQTGGFDVADIFPSKKFLHHLSGKRARLTSIHKKLDNLINNIVAEHHVSTSSKANETLLDVLLRLKDSAEFPLTADNVKAIILDMFGAGTDTSSATVEWAISELIRCPRAMEKVQAELRQALNGKEKIQEEDIQDLAYLNLVIRETLRLHPPLPLVMPRECREPVNLAGYEIANKTKLIVNVFAINRDPEYWKDAEAFIPERFENNPNNIMGADYEYLPFGAGRRMCPGAALGLANVQLPLANILYHFNWKLPNGASHDQLDMTESFGATVQRKTELLLVPSF.

Topologically, residues Met1–Thr6 are cytoplasmic. A helical; Signal-anchor for type II membrane protein membrane pass occupies residues Thr7–Thr23. Residues Arg24–Phe488 lie on the Lumenal side of the membrane. Residues Asn169, Asn260, and Asn379 are each glycosylated (N-linked (GlcNAc...) asparagine). Cys432 is a binding site for heme.

The protein belongs to the cytochrome P450 family. Requires heme as cofactor.

The protein resides in the endoplasmic reticulum membrane. The catalysed reaction is (+)-(R)-germacrene A + 3 reduced [NADPH--hemoprotein reductase] + 3 O2 = germacra-1(10),4,11(13)-trien-12-oate + 3 oxidized [NADPH--hemoprotein reductase] + 4 H2O + 4 H(+). It functions in the pathway secondary metabolite biosynthesis; terpenoid biosynthesis. Involved in the biosynthesis of germacrene-derived sesquiterpene lactones. Catalyzes three consecutive oxidations of germacrene A to produce germacrene A acid. Could also catalyze the three-step oxidation of non-natural substrate amorphadiene to artemisinic acid. In Lactuca sativa (Garden lettuce), this protein is Germacrene A hydroxylase.